Consider the following 834-residue polypeptide: Dual specificity calcium/calmodulin-dependent 3',5'-cyclic nucleotide phosphodiesterase 1 (834 aa).

The tract at residues 152–338 (HSHGRDDQQQ…DELSEVQPDA (187 aa)) is disordered. Low complexity predominate over residues 207-222 (THSGPTGPPSNTSSET). Over residues 236–252 (TVRESVMEESPSKDPGD) the composition is skewed to basic and acidic residues. The span at 260 to 301 (STSTLTSQTTTSSSATAEPSAKAAESQAGSAGSSGSCSNPAA) shows a compositional bias: low complexity. Positions 313–322 (WARSMSTNKT) are enriched in polar residues. The calmodulin-binding stretch occupies residues 364-387 (EKPKFRSVAHAIRAGIFVDRMYRR). Residues 392–786 (ALTAFPPDVV…RIWKEQAVKD (395 aa)) form the PDEase domain. Histidine 469 acts as the Proton donor in catalysis. Zn(2+) is bound by residues histidine 473, histidine 509, aspartate 510, and aspartate 617. Aspartate 510 lines the Mg(2+) pocket. 2 disordered regions span residues 720-744 (IVIP…AKTT) and 797-834 (EEAA…GAAA). Residues 732-741 (DKPRDHRTEA) are compositionally biased toward basic and acidic residues. Low complexity predominate over residues 823 to 834 (EPAAEPADGAAA).

It belongs to the cyclic nucleotide phosphodiesterase family. PDE1 subfamily. The cofactor is Zn(2+). Mg(2+) is required as a cofactor. As to expression, expressed in the head (at protein level). Expressed in Malpighian tubules. Expressed in neurons in the brain and ventral ganglia with male flies having higher levels of expression in the abdominal ganglia compared to female flies.

The enzyme catalyses a nucleoside 3',5'-cyclic phosphate + H2O = a nucleoside 5'-phosphate + H(+). It catalyses the reaction 3',5'-cyclic GMP + H2O = GMP + H(+). The catalysed reaction is 3',5'-cyclic AMP + H2O = AMP + H(+). Type I PDE are activated by the binding of calmodulin in the presence of Ca(2+). Inhibited by zaprinast and sildenafil. Cyclic nucleotide phosphodiesterase with a dual specificity for the second messengers cAMP and cGMP, which are key regulators of many important physiological processes. Required for male fertility and male mating behavior. In Drosophila melanogaster (Fruit fly), this protein is Dual specificity calcium/calmodulin-dependent 3',5'-cyclic nucleotide phosphodiesterase 1.